A 153-amino-acid chain; its full sequence is uncharacterized protein (153 aa).

Disordered stretches follow at residues 30-66 (GPTVDTKRQELPILSEDSDGSDKEDEQPQVVVLRKGD) and 79-153 (IKEN…DYDD). Residues 45-56 (EDSDGSDKEDEQ) are compositionally biased toward acidic residues. Polar residues-rich tracts occupy residues 106-116 (GDTTSGVNACS) and 130-144 (GTKSSQKQVKNSSLL).

This is an uncharacterized protein from Xenopus laevis (African clawed frog).